Reading from the N-terminus, the 119-residue chain is Fluoride-specific ion channel FluC (119 aa).

4 helical membrane-spanning segments follow: residues 5-25 (ILPL…LNLA), 30-50 (LSPA…IGIF), 59-79 (WKLL…GFSL), and 92-112 (SALA…WLGL). 2 residues coordinate Na(+): glycine 69 and threonine 72.

The protein belongs to the fluoride channel Fluc/FEX (TC 1.A.43) family.

The protein resides in the cell inner membrane. The enzyme catalyses fluoride(in) = fluoride(out). Na(+) is not transported, but it plays an essential structural role and its presence is essential for fluoride channel function. Its function is as follows. Fluoride-specific ion channel. Important for reducing fluoride concentration in the cell, thus reducing its toxicity. This Neisseria gonorrhoeae (strain NCCP11945) protein is Fluoride-specific ion channel FluC.